A 354-amino-acid chain; its full sequence is Quinone-reactive Ni/Fe-hydrogenase small chain (354 aa).

A signal peptide (tat-type signal) is located at residues 1-36 (MLEEKGIERRDFMKWAGAMTAMLSLPATFTPLTAKA). Positions 53, 56, 153, 186, 224, 227, 252, and 258 each coordinate [4Fe-4S] cluster. Residues cysteine 267, cysteine 286, and cysteine 289 each contribute to the [3Fe-4S] cluster site.

The protein belongs to the [NiFe]/[NiFeSe] hydrogenase small subunit family. In terms of assembly, heterodimer of a large and a small subunit. The cofactor is [4Fe-4S] cluster. Requires [3Fe-4S] cluster as cofactor. Post-translationally, predicted to be exported by the Tat system. The position of the signal peptide cleavage has been experimentally proven.

Its subcellular location is the cell membrane. The catalysed reaction is H2 + a menaquinone = a menaquinol. The polypeptide is Quinone-reactive Ni/Fe-hydrogenase small chain (hydA) (Wolinella succinogenes (strain ATCC 29543 / DSM 1740 / CCUG 13145 / JCM 31913 / LMG 7466 / NCTC 11488 / FDC 602W) (Vibrio succinogenes)).